The sequence spans 361 residues: Trans-2,3-enoyl-CoA reductase-like (361 aa).

Phosphoserine occurs at positions 33 and 35. Helical transmembrane passes span 139–159 (VGWTTVFLAEYSGPLLIYLLF), 181–201 (VHLAFFCHCIHYIRLLLETLF), 215–235 (LIKGCAFYWGFTSWMAYYINH), and 309–329 (ISFTVMTQTLPVGIFTILMTI).

Belongs to the steroid 5-alpha reductase family. Expression is highest in the heart with very low to almost undetectable levels in brain, skeletal muscle, stomach, pancreas, liver, kidney, small intestine, and uterus.

The protein localises to the membrane. It is found in the endoplasmic reticulum. This Mus musculus (Mouse) protein is Trans-2,3-enoyl-CoA reductase-like (Tecrl).